Reading from the N-terminus, the 116-residue chain is Large ribosomal subunit protein bL20 (116 aa).

The protein belongs to the bacterial ribosomal protein bL20 family.

In terms of biological role, binds directly to 23S ribosomal RNA and is necessary for the in vitro assembly process of the 50S ribosomal subunit. It is not involved in the protein synthesizing functions of that subunit. The polypeptide is Large ribosomal subunit protein bL20 (Nitratiruptor sp. (strain SB155-2)).